The chain runs to 330 residues: MSGNGGGIGTGLGSLAGSGRTVTTIAEVRAAADAVRAAGGRVGFFGTSGALHEGHLTVIRRMAAECDLSIMPLFLAPVPGVTSDAVPAYDRDFDADAALAFDAGVNLVFRPAVAEMYPALPVRTAVVPADELAAPWEGAEDPSFLRMAATALAKYYNIVGPCRAYTGEKDWVPLTVLRRMVVDLSIRAEIVACPVVRLADGLCASSRNSRLSAADRAAAPTLYAALTAAVAAVEAGERDAEAIRSLLRRRISAVAPVDYAEVVDATTLARVDPLAGELRLLVSADFTGTHLFDNVGLTVRDADADADARVTVPAVGTTAAAPATDRRTSG.

His-55 functions as the Proton donor in the catalytic mechanism. ATP-binding positions include 167-170 (GEKD), Val-196, and 204-207 (ASSR).

The protein belongs to the pantothenate synthetase family. As to quaternary structure, homodimer.

The protein localises to the cytoplasm. It carries out the reaction (R)-pantoate + beta-alanine + ATP = (R)-pantothenate + AMP + diphosphate + H(+). It participates in cofactor biosynthesis; (R)-pantothenate biosynthesis; (R)-pantothenate from (R)-pantoate and beta-alanine: step 1/1. Its function is as follows. Catalyzes the condensation of pantoate with beta-alanine in an ATP-dependent reaction via a pantoyl-adenylate intermediate. This chain is Pantothenate synthetase 2, found in Frankia alni (strain DSM 45986 / CECT 9034 / ACN14a).